Here is a 248-residue protein sequence, read N- to C-terminus: Ribonuclease PH (248 aa).

Phosphate-binding positions include Arg-86 and 124–126 (GTR).

This sequence belongs to the RNase PH family. As to quaternary structure, homohexameric ring arranged as a trimer of dimers.

The catalysed reaction is tRNA(n+1) + phosphate = tRNA(n) + a ribonucleoside 5'-diphosphate. Functionally, phosphorolytic 3'-5' exoribonuclease that plays an important role in tRNA 3'-end maturation. Removes nucleotide residues following the 3'-CCA terminus of tRNAs; can also add nucleotides to the ends of RNA molecules by using nucleoside diphosphates as substrates, but this may not be physiologically important. Probably plays a role in initiation of 16S rRNA degradation (leading to ribosome degradation) during starvation. The sequence is that of Ribonuclease PH from Clostridium kluyveri (strain NBRC 12016).